Here is a 59-residue protein sequence, read N- to C-terminus: Small, acid-soluble spore protein H 2 (59 aa).

This sequence belongs to the SspH family.

It localises to the spore core. The polypeptide is Small, acid-soluble spore protein H 2 (sspH2) (Bacillus anthracis).